Here is a 177-residue protein sequence, read N- to C-terminus: Large ribosomal subunit protein eL20 (177 aa).

Belongs to the eukaryotic ribosomal protein eL20 family.

In Spodoptera frugiperda (Fall armyworm), this protein is Large ribosomal subunit protein eL20 (RpL18A).